The chain runs to 648 residues: Fidgetin-like protein 2 (648 aa).

The interval 1–36 is disordered; that stretch reads MHWTPEHAQPLNQWPEQHLDVSSTTPSPAHKLELPP. A compositionally biased stretch (polar residues) spans 10-27; sequence PLNQWPEQHLDVSSTTPS. Residues Ala-394 and 434-439 contribute to the ATP site; that span reads GCGKAL.

The protein belongs to the AAA ATPase family. It depends on Mg(2+) as a cofactor.

It localises to the cytoplasm. It is found in the cell cortex. It carries out the reaction ATP + H2O = ADP + phosphate + H(+). Microtubule-severing enzyme that negatively regulates cell migration and wound healing. In migrating cells, targets dynamic microtubules (MTs) at the leading edge and severs them, thereby suppressing motility. Microtubule severing releases ARHGEF2 which activates RHOA, which in turn regulates focal ahesion turnover via focal adhesion kinase, as opposed to F-actin polymerization, to suppress cell motility. Negative regulator of axon regeneration that suppresses axonal growth by selectively severing dynamic MTs in the distal axon shaft and growth cone. Contributes to proper cell branching during endothelial and neuronal development. The polypeptide is Fidgetin-like protein 2 (Fignl2) (Rattus norvegicus (Rat)).